The chain runs to 125 residues: Large ribosomal subunit protein uL22 (125 aa).

Belongs to the universal ribosomal protein uL22 family. In terms of assembly, part of the 50S ribosomal subunit.

This protein binds specifically to 23S rRNA; its binding is stimulated by other ribosomal proteins, e.g. L4, L17, and L20. It is important during the early stages of 50S assembly. It makes multiple contacts with different domains of the 23S rRNA in the assembled 50S subunit and ribosome. Functionally, the globular domain of the protein is located near the polypeptide exit tunnel on the outside of the subunit, while an extended beta-hairpin is found that lines the wall of the exit tunnel in the center of the 70S ribosome. This chain is Large ribosomal subunit protein uL22, found in Thermobifida fusca (strain YX).